The sequence spans 501 residues: Putative ribose/galactose/methyl galactoside import ATP-binding protein 1 (501 aa).

ABC transporter domains follow at residues 5–237 (VSLS…VGRQ) and 249–492 (VPGE…MTRS). 37 to 44 (GENGAGKS) contributes to the ATP binding site.

The protein belongs to the ABC transporter superfamily. Carbohydrate importer 2 (CUT2) (TC 3.A.1.2) family.

The protein resides in the cell inner membrane. The catalysed reaction is D-ribose(out) + ATP + H2O = D-ribose(in) + ADP + phosphate + H(+). The enzyme catalyses D-galactose(out) + ATP + H2O = D-galactose(in) + ADP + phosphate + H(+). Functionally, part of an ABC transporter complex involved in carbohydrate import. Could be involved in ribose, galactose and/or methyl galactoside import. Responsible for energy coupling to the transport system. The chain is Putative ribose/galactose/methyl galactoside import ATP-binding protein 1 from Rhizobium meliloti (strain 1021) (Ensifer meliloti).